The chain runs to 509 residues: Activin receptor type-1 (509 aa).

The first 20 residues, 1 to 20 (MVDGVMILPVLIMIALPSPS), serve as a signal peptide directing secretion. Over 21–123 (MEDEKPKVNP…FPGTQNFHLE (103 aa)) the chain is Extracellular. The N-linked (GlcNAc...) asparagine glycan is linked to Asn-102. Residues 124–146 (VGLIILSVVFAVCLLACLLGVAL) form a helical membrane-spanning segment. The Cytoplasmic portion of the chain corresponds to 147-509 (RKFKRRNQER…NSLDKLKTDC (363 aa)). Residues 178-207 (STLADLLDHSCTSGSGSGLPFLVQRTVARQ) form the GS domain. Positions 208 to 502 (ITLLECVGKG…KTLTKIDNSL (295 aa)) constitute a Protein kinase domain. Residues 214-222 (VGKGRYGEV) and Lys-235 contribute to the ATP site. Asp-336 functions as the Proton acceptor in the catalytic mechanism. At Ser-501 the chain carries Phosphoserine.

It belongs to the protein kinase superfamily. TKL Ser/Thr protein kinase family. TGFB receptor subfamily. Interacts with FKBP1A. Interacts with FCHO1. Interacts with CLU. Interacts with type II receptors AMHR2 and ACVR2A. Interacts with BMP7. Interacts with GDF2/BMP9. Interacts with BMP6 (when glycosylated); the interaction may induce HAMP expression. Interacts with TSC22D1/TSC-22. Mg(2+) is required as a cofactor. The cofactor is Mn(2+). In terms of tissue distribution, expressed in normal parenchymal cells, endothelial cells, fibroblasts and tumor-derived epithelial cells.

It is found in the membrane. It catalyses the reaction L-threonyl-[receptor-protein] + ATP = O-phospho-L-threonyl-[receptor-protein] + ADP + H(+). The enzyme catalyses L-seryl-[receptor-protein] + ATP = O-phospho-L-seryl-[receptor-protein] + ADP + H(+). Bone morphogenetic protein (BMP) type I receptor that is involved in a wide variety of biological processes, including bone, heart, cartilage, nervous, and reproductive system development and regulation. As a type I receptor, forms heterotetrameric receptor complexes with the type II receptors AMHR2, ACVR2A or ACVR2B. Upon binding of ligands such as BMP7 or GDF2/BMP9 to the heteromeric complexes, type II receptors transphosphorylate ACVR1 intracellular domain. In turn, ACVR1 kinase domain is activated and subsequently phosphorylates SMAD1/5/8 proteins that transduce the signal. In addition to its role in mediating BMP pathway-specific signaling, suppresses TGFbeta/activin pathway signaling by interfering with the binding of activin to its type II receptor. Besides canonical SMAD signaling, can activate non-canonical pathways such as p38 mitogen-activated protein kinases/MAPKs. May promote the expression of HAMP, potentially via its interaction with BMP6. The chain is Activin receptor type-1 (ACVR1) from Homo sapiens (Human).